We begin with the raw amino-acid sequence, 492 residues long: Putative BTB/POZ domain and WD-repeat protein R786 (492 aa).

The BTB domain occupies 16–86 (TDVEIVLIDE…FYGQIVDSTN (71 aa)). 2 WD repeats span residues 241 to 281 (QSSC…IKIK) and 286 to 325 (LINRLIANHTIITDYNLFISIGYNESILVWDKNYTISKGI).

It belongs to the mimivirus BTB/WD family.

This is Putative BTB/POZ domain and WD-repeat protein R786 from Acanthamoeba polyphaga (Amoeba).